We begin with the raw amino-acid sequence, 567 residues long: MSQEFDYIIVGAGSAGNTLATRLTEDEGVTVLLLEAGGPDYRFDFRTQMPAALAFPLQGRRYNWAYETDPEPHMDGRRMECGRGKGLGGSSLINGMCYIRGNAMDYDGWAKLPGLEDWSYLDCLPYFRKAETRDIGPNDYHGGDGPVSVTTPKAGNNPLFHAMVEAGVQAGYPRTEDLNGYQQEGFGPMDRTVTPNGRRASTARGYLDVAKKRSTLTIVTHALTDKVLFEGKRAVGVRYLVGAAEERVEARARKEVIVCSGAIASPQLLQRSGVGPAKLLESLDIPVVHDLPGVGENLQDHLELYLQYACTQPVSLYPSLLWYNQPAIGAEWLFNGTGIGASNQFEAGGFIRTRPEFEWPNIQYHFLPVAINYNGSNGVKEHGFQAHMGSMRSPSRGRVQVKSKDPRQHPSILFNYMATEQDWQEFRDGIRLTREIMQQPALDAFRGREISPGIEVQTDEQLDKFIREHAETAFHPSCSCKMGTDDMAVVDGEGRVHGMQGLRVVDASIMPIITTGNLNAPTIMMAEKIADKIRGRQPLPRSKAPYYVAGDAPVKGKAMRDVSAVAQ.

Position 6 to 35 (6 to 35 (DYIIVGAGSAGNTLATRLTEDEGVTVLLLE)) interacts with FAD. The active-site Proton acceptor is His-475.

This sequence belongs to the GMC oxidoreductase family. It depends on FAD as a cofactor.

The enzyme catalyses choline + A = betaine aldehyde + AH2. It carries out the reaction betaine aldehyde + NAD(+) + H2O = glycine betaine + NADH + 2 H(+). The protein operates within amine and polyamine biosynthesis; betaine biosynthesis via choline pathway; betaine aldehyde from choline (cytochrome c reductase route): step 1/1. In terms of biological role, involved in the biosynthesis of the osmoprotectant glycine betaine. Catalyzes the oxidation of choline to betaine aldehyde and betaine aldehyde to glycine betaine at the same rate. The sequence is that of Oxygen-dependent choline dehydrogenase from Pseudomonas fluorescens (strain Pf0-1).